We begin with the raw amino-acid sequence, 927 residues long: DNA mismatch repair protein MutS (927 aa).

The tract at residues 44-80 is disordered; the sequence is DESLKRPRNRHKPTSVPSIPLDSESQEQLETADNDND. Positions 67–79 are enriched in acidic residues; the sequence is ESQEQLETADNDN. 725–732 is a binding site for ATP; that stretch reads GPNASGKS.

The protein belongs to the DNA mismatch repair MutS family.

This protein is involved in the repair of mismatches in DNA. It is possible that it carries out the mismatch recognition step. This protein has a weak ATPase activity. The sequence is that of DNA mismatch repair protein MutS from Prochlorococcus marinus (strain MIT 9303).